The following is a 313-amino-acid chain: Acetyl-coenzyme A carboxylase carboxyl transferase subunit alpha (313 aa).

The CoA carboxyltransferase C-terminal domain occupies 34–288 (KLKDQRDIAL…KNVVLEAVNE (255 aa)).

Belongs to the AccA family. Acetyl-CoA carboxylase is a heterohexamer composed of biotin carboxyl carrier protein (AccB), biotin carboxylase (AccC) and two subunits each of ACCase subunit alpha (AccA) and ACCase subunit beta (AccD).

Its subcellular location is the cytoplasm. The catalysed reaction is N(6)-carboxybiotinyl-L-lysyl-[protein] + acetyl-CoA = N(6)-biotinyl-L-lysyl-[protein] + malonyl-CoA. It participates in lipid metabolism; malonyl-CoA biosynthesis; malonyl-CoA from acetyl-CoA: step 1/1. Functionally, component of the acetyl coenzyme A carboxylase (ACC) complex. First, biotin carboxylase catalyzes the carboxylation of biotin on its carrier protein (BCCP) and then the CO(2) group is transferred by the carboxyltransferase to acetyl-CoA to form malonyl-CoA. In Fusobacterium nucleatum subsp. nucleatum (strain ATCC 25586 / DSM 15643 / BCRC 10681 / CIP 101130 / JCM 8532 / KCTC 2640 / LMG 13131 / VPI 4355), this protein is Acetyl-coenzyme A carboxylase carboxyl transferase subunit alpha.